The following is a 126-amino-acid chain: Small ribosomal subunit protein uS12 (126 aa).

The residue at position 89 (aspartate 89) is a 3-methylthioaspartic acid.

This sequence belongs to the universal ribosomal protein uS12 family. Part of the 30S ribosomal subunit. Contacts proteins S8 and S17. May interact with IF1 in the 30S initiation complex.

In terms of biological role, with S4 and S5 plays an important role in translational accuracy. Interacts with and stabilizes bases of the 16S rRNA that are involved in tRNA selection in the A site and with the mRNA backbone. Located at the interface of the 30S and 50S subunits, it traverses the body of the 30S subunit contacting proteins on the other side and probably holding the rRNA structure together. The combined cluster of proteins S8, S12 and S17 appears to hold together the shoulder and platform of the 30S subunit. This Sulfurimonas denitrificans (strain ATCC 33889 / DSM 1251) (Thiomicrospira denitrificans (strain ATCC 33889 / DSM 1251)) protein is Small ribosomal subunit protein uS12.